Reading from the N-terminus, the 1316-residue chain is DNA-directed RNA polymerase subunit beta' (1316 aa).

4 residues coordinate Zn(2+): Cys-60, Cys-62, Cys-75, and Cys-78. Mg(2+)-binding residues include Asp-535, Asp-537, and Asp-539. 4 residues coordinate Zn(2+): Cys-891, Cys-968, Cys-975, and Cys-978.

Belongs to the RNA polymerase beta' chain family. In terms of assembly, the RNAP catalytic core consists of 2 alpha, 1 beta, 1 beta' and 1 omega subunit. When a sigma factor is associated with the core the holoenzyme is formed, which can initiate transcription. Mg(2+) is required as a cofactor. It depends on Zn(2+) as a cofactor.

The enzyme catalyses RNA(n) + a ribonucleoside 5'-triphosphate = RNA(n+1) + diphosphate. Functionally, DNA-dependent RNA polymerase catalyzes the transcription of DNA into RNA using the four ribonucleoside triphosphates as substrates. The polypeptide is DNA-directed RNA polymerase subunit beta' (Mycolicibacterium paratuberculosis (strain ATCC BAA-968 / K-10) (Mycobacterium paratuberculosis)).